A 67-amino-acid chain; its full sequence is Ferredoxin FdxE (67 aa).

Positions 10, 11, 15, 16, and 54 each coordinate [3Fe-4S] cluster.

Interacts with the cytochrome P450 143 with high affinity (Kd=84 nM). It depends on [3Fe-4S] cluster as a cofactor.

Ferredoxin that is the redox partner of cytochrome CYP143, a cytochrome P450 encoded by an adjacent gene. The polypeptide is Ferredoxin FdxE (Mycobacterium tuberculosis (strain ATCC 25618 / H37Rv)).